Consider the following 430-residue polypeptide: D-galactonate transporter (430 aa).

Residues 1–17 lie on the Cytoplasmic side of the membrane; that stretch reads MDIPVNAAKPGRRRYLT. The helical transmembrane segment at 18–39 threads the bilayer; that stretch reads LVMIFITVVICYVDRANLAVAS. Residues Y29 and R32 each contribute to the D-galactonate site. At 40–50 the chain is on the periplasmic side; the sequence is AHIQEEFGITK. The helical transmembrane segment at 51 to 74 threads the bilayer; sequence AEMGYVFSAFAWLYTLCQIPGGWF. Y64 contacts D-galactonate. At 75–81 the chain is on the cytoplasmic side; it reads LDRVGSR. Residues 82–100 traverse the membrane as a helical segment; it reads VTYFIAIFGWSVATLFQGF. Residues 101–103 lie on the Periplasmic side of the membrane; that stretch reads ATG. A helical transmembrane segment spans residues 104-125; the sequence is LMSLIGLRAITGIFEAPAFPTN. Residues 126-141 are Cytoplasmic-facing; the sequence is NRMVTSWFPEHERASA. Residues 142 to 164 traverse the membrane as a helical segment; that stretch reads VGFYTSGQFVGLAFLTPLLIWIQ. Over 165–168 the chain is Periplasmic; that stretch reads EMLS. A helical transmembrane segment spans residues 169–190; sequence WHWVFIVTGGIGIIWSLIWFKV. The Cytoplasmic segment spans residues 191–241; sequence YQPPRLTKGISKAELDYIRDGGGLVDGDAPVKKEARQPLTAKDWKLVFHRK. The helical transmembrane segment at 242-267 threads the bilayer; sequence LIGVYLGQFAVASTLWFFLTWFPNYL. Residues 268–276 are Periplasmic-facing; the sequence is TQEKGITAL. A helical membrane pass occupies residues 277 to 297; that stretch reads KAGFMTTVPFLAAFVGVLLSG. Residues 298–314 are Cytoplasmic-facing; it reads WVADLLVRKGFSLGFAR. Residues 315-333 form a helical membrane-spanning segment; sequence KTPIICGLLISTCIMGANY. The Periplasmic portion of the chain corresponds to 334 to 336; the sequence is TND. A helical membrane pass occupies residues 337–354; the sequence is PMMIMCLMALAFFGNGFA. The Cytoplasmic portion of the chain corresponds to 355–373; the sequence is SITWSLVSSLAPMRLIGLT. D-galactonate is bound at residue W358. Residues 374–395 form a helical membrane-spanning segment; sequence GGVFNFAGGLGGITVPLVVGYL. The Periplasmic portion of the chain corresponds to 396–400; that stretch reads AQGYG. Residues 401–423 traverse the membrane as a helical segment; the sequence is FAPALVYISAVALIGALSYILLV. The Cytoplasmic portion of the chain corresponds to 424-430; that stretch reads GDVKRVG.

This sequence belongs to the major facilitator superfamily. Phthalate permease family.

It localises to the cell inner membrane. It catalyses the reaction D-galactonate(in) + H(+)(in) = D-galactonate(out) + H(+)(out). Functionally, involved in D-galactonate metabolism. Catalyzes the proton-dependent uptake of galactonate into the cell. The chain is D-galactonate transporter (dgoT) from Escherichia coli O6:H1 (strain CFT073 / ATCC 700928 / UPEC).